The chain runs to 265 residues: Major pollen allergen Hol l 1 (265 aa).

The N-terminal stretch at 1–25 (MASSSRSVLLLVAALFAVFLGSAHG) is a signal peptide. N34 is a glycosylation site (N-linked (GlcNAc...) asparagine). In terms of domain architecture, Expansin-like EG45 spans 63-169 (GGACGYKDVD…RRVKCKYPDG (107 aa)). Positions 183–264 (NYLALLVKYI…GWKADTAYEA (82 aa)) constitute an Expansin-like CBD domain.

The protein belongs to the expansin family. Expansin B subfamily.

It is found in the secreted. The sequence is that of Major pollen allergen Hol l 1 from Holcus lanatus (Yorkshire-fog).